The following is a 149-amino-acid chain: Arginine repressor (149 aa).

Belongs to the ArgR family.

It localises to the cytoplasm. The protein operates within amino-acid biosynthesis; L-arginine biosynthesis [regulation]. Its function is as follows. Regulates arginine biosynthesis genes. This Listeria welshimeri serovar 6b (strain ATCC 35897 / DSM 20650 / CCUG 15529 / CIP 8149 / NCTC 11857 / SLCC 5334 / V8) protein is Arginine repressor.